The chain runs to 344 residues: Hypoxia-inducible factor 1-alpha inhibitor (344 aa).

A2 bears the N-acetylalanine mark. One can recognise a JmjC domain in the interval 133-303 (GRVYLQQTLN…PKRIEYPLKA (171 aa)). Residue Y136 coordinates 2-oxoglutarate. Substrate contacts are provided by residues D143 and 173–174 (LT). T187 contributes to the 2-oxoglutarate binding site. Residues H190 and D192 each contribute to the Fe cation site. 192-194 (DEQ) is a substrate binding site. Residues N196 and K205 each coordinate 2-oxoglutarate. 229–230 (RQ) is a substrate binding site. Position 270 (H270) interacts with Fe cation. N285 contacts 2-oxoglutarate. Substrate is bound by residues A291 and N312.

In terms of assembly, homodimer; homodimerization is essential for catalytic activity. It depends on Fe(2+) as a cofactor.

It localises to the nucleus. Its subcellular location is the cytoplasm. The protein resides in the perinuclear region. The catalysed reaction is L-asparaginyl-[hypoxia-inducible factor alpha subunit] + 2-oxoglutarate + O2 = (3S)-3-hydroxy-L-asparaginyl-[hypoxia-inducible factor alpha subunit] + succinate + CO2. It catalyses the reaction L-histidyl-[ankyrin-repeat domain protein] + 2-oxoglutarate + O2 = (3S)-3-hydroxy-L-histidyl-[ankyrin-repeat domain protein] + succinate + CO2. It carries out the reaction L-asparaginyl-[ankyrin-repeat domain protein] + 2-oxoglutarate + O2 = (3S)-3-hydroxy-L-asparaginyl-[ankyrin-repeat domain protein] + succinate + CO2. The enzyme catalyses L-aspartyl-[ankyrin-repeat domain protein] + 2-oxoglutarate + O2 = (3S)-3-hydroxy-L-aspartyl-[ankyrin-repeat domain protein] + succinate + CO2. Its function is as follows. Hydroxylates a specific Asn residue in the C-terminal transactivation domain (CAD) of HIF-1 alpha. The hydroxylation prevents interaction of HIF-1 with transcriptional coactivators. Also hydroxylates specific Asn, Asp and His residues within ankyrin repeat domain-containing proteins. In Danio rerio (Zebrafish), this protein is Hypoxia-inducible factor 1-alpha inhibitor (hif1an).